A 282-amino-acid chain; its full sequence is Probable endonuclease 4 (282 aa).

The Zn(2+) site is built by histidine 70, histidine 110, glutamate 146, aspartate 180, histidine 183, histidine 217, aspartate 230, histidine 232, and glutamate 262.

The protein belongs to the AP endonuclease 2 family. Requires Zn(2+) as cofactor.

It catalyses the reaction Endonucleolytic cleavage to 5'-phosphooligonucleotide end-products.. Endonuclease IV plays a role in DNA repair. It cleaves phosphodiester bonds at apurinic or apyrimidinic (AP) sites, generating a 3'-hydroxyl group and a 5'-terminal sugar phosphate. This Wolinella succinogenes (strain ATCC 29543 / DSM 1740 / CCUG 13145 / JCM 31913 / LMG 7466 / NCTC 11488 / FDC 602W) (Vibrio succinogenes) protein is Probable endonuclease 4.